The primary structure comprises 264 residues: MNTKLSLSQTKIFTFTTWFNDTRSGLDRRSSISPTLCSKPVYSGKLKAAKETARIETSNTKNASIEDSFFSKIAINYLSKNLQDAAGISSSSKSTDYDRLVDTATRVSRNFDTKQQHEFVLSSLDRALPTVISSLIKMAFPPSKVSRELFALFTTISFAWLVGPSEVRETEVNGRKEKSVVYIEKCRFLEQSNCVGMCTHICKIPSQIFIKNSLGMPIYMEPDFNDLSCKMMFGREPPEIEDDPAMKQPCFEFCKSNKSYGVKH.

Residues 1-47 (MNTKLSLSQTKIFTFTTWFNDTRSGLDRRSSISPTLCSKPVYSGKLK) constitute a chloroplast transit peptide.

The cofactor is Fe cation. As to expression, expressed in hypocotyls and shoots. Expressed at low levels in roots.

It is found in the plastid. It localises to the chloroplast. The enzyme catalyses all-trans-beta-carotene = 9-cis-beta-carotene. Functionally, involved in strigolactones biosynthesis by catalyzing the isomerization of the C9-C10 double bond in all-trans-beta-carotene leading to 9-cis-beta-carotene and providing the substrate for CCD7. Strigolactones are hormones that inhibit tillering and shoot branching through the MAX-dependent pathway, contribute to the regulation of shoot architectural response to phosphate-limiting conditions and function as rhizosphere signal that stimulates hyphal branching of arbuscular mycorrhizal fungi and trigger seed germination of root parasitic weeds. The protein is Beta-carotene isomerase D27, chloroplastic (D27) of Arabidopsis thaliana (Mouse-ear cress).